Consider the following 118-residue polypeptide: NADH-ubiquinone oxidoreductase chain 3 (118 aa).

3 helical membrane-spanning segments follow: residues I6–L26, L62–V82, and I87–V107.

It belongs to the complex I subunit 3 family.

It localises to the mitochondrion membrane. The enzyme catalyses a ubiquinone + NADH + 5 H(+)(in) = a ubiquinol + NAD(+) + 4 H(+)(out). In terms of biological role, core subunit of the mitochondrial membrane respiratory chain NADH dehydrogenase (Complex I) that is believed to belong to the minimal assembly required for catalysis. Complex I functions in the transfer of electrons from NADH to the respiratory chain. The immediate electron acceptor for the enzyme is believed to be ubiquinone. This chain is NADH-ubiquinone oxidoreductase chain 3 (ND3), found in Marchantia polymorpha (Common liverwort).